A 237-amino-acid chain; its full sequence is ATP synthase subunit a (237 aa).

Transmembrane regions (helical) follow at residues 17–37, 78–98, 178–198, and 201–221; these read LSDM…AVAA, LGVT…PFWL, ILLG…CGSI, and MVIM…AFIF.

It belongs to the ATPase A chain family. As to quaternary structure, F-type ATPases have 2 components, CF(1) - the catalytic core - and CF(0) - the membrane proton channel. CF(1) has five subunits: alpha(3), beta(3), gamma(1), delta(1), epsilon(1). CF(0) has three main subunits: a(1), b(2) and c(9-12). The alpha and beta chains form an alternating ring which encloses part of the gamma chain. CF(1) is attached to CF(0) by a central stalk formed by the gamma and epsilon chains, while a peripheral stalk is formed by the delta and b chains.

The protein localises to the cell membrane. Its function is as follows. Key component of the proton channel; it plays a direct role in the translocation of protons across the membrane. The chain is ATP synthase subunit a from Bacillus caldotenax.